The primary structure comprises 539 residues: CTP synthase (539 aa).

The amidoligase domain stretch occupies residues 1 to 268; the sequence is MADTKYIFVT…DETVLRKVGL (268 aa). Serine 15 contributes to the CTP binding site. Serine 15 provides a ligand contact to UTP. 16–21 is an ATP binding site; sequence SLGKGI. L-glutamine is bound at residue tyrosine 56. Aspartate 73 is an ATP binding site. The Mg(2+) site is built by aspartate 73 and glutamate 143. CTP is bound by residues 150 to 152, 189 to 194, and lysine 225; these read DIE and KTKPTQ. Residues 189–194 and lysine 225 contribute to the UTP site; that span reads KTKPTQ. Residues 294–536 form the Glutamine amidotransferase type-1 domain; that stretch reads TIALVGKYVE…IREAIKTRKK (243 aa). Residue glycine 356 coordinates L-glutamine. Cysteine 383 acts as the Nucleophile; for glutamine hydrolysis in catalysis. L-glutamine contacts are provided by residues 384–387, glutamate 407, and arginine 464; that span reads LGMQ. Active-site residues include histidine 509 and glutamate 511.

It belongs to the CTP synthase family. As to quaternary structure, homotetramer.

The enzyme catalyses UTP + L-glutamine + ATP + H2O = CTP + L-glutamate + ADP + phosphate + 2 H(+). It catalyses the reaction L-glutamine + H2O = L-glutamate + NH4(+). The catalysed reaction is UTP + NH4(+) + ATP = CTP + ADP + phosphate + 2 H(+). It participates in pyrimidine metabolism; CTP biosynthesis via de novo pathway; CTP from UDP: step 2/2. With respect to regulation, allosterically activated by GTP, when glutamine is the substrate; GTP has no effect on the reaction when ammonia is the substrate. The allosteric effector GTP functions by stabilizing the protein conformation that binds the tetrahedral intermediate(s) formed during glutamine hydrolysis. Inhibited by the product CTP, via allosteric rather than competitive inhibition. In terms of biological role, catalyzes the ATP-dependent amination of UTP to CTP with either L-glutamine or ammonia as the source of nitrogen. Regulates intracellular CTP levels through interactions with the four ribonucleotide triphosphates. The protein is CTP synthase of Porphyromonas gingivalis (strain ATCC BAA-308 / W83).